Consider the following 375-residue polypeptide: uncharacterized protein (375 aa).

The disordered stretch occupies residues glutamate 54–histidine 78.

This is an uncharacterized protein from Bos taurus (Bovine).